The primary structure comprises 382 residues: MAIFYDDPLERLNQPIKTKSYRKKQVVQRVHVFIFDNWKLILLGILNLIFLIIAIVFAILFFVGSADCAQLPDYTTSPASQLTTSAISSRTSEVQTNAITTTQGTPSNKTSTTTPSTSKVICASGFTLVGTKCGKLVSSNQPRTEADSICKGYGGSTLFSVRNEQETRDMLDFVKDSNIDFLWTGLVCNQTARTSCIWDVKSGTTADYNNFADGFPNVVYGYCIYFIVTGNSAGQWGSEQCSQLMNFVCELPTTIRDPDCKYNYNKNCYIRFDITLTIPQAQRFCNEKGADLVSIHSANENRFILTIYDIHGQILLGGLAPAVDFIVWLDGSPTTYSNLLYFYDTRSCVLMTVARGGPYDGDWYTMNCNVQEFFLCKRAIDF.

Over 1 to 40 (MAIFYDDPLERLNQPIKTKSYRKKQVVQRVHVFIFDNWKL) the chain is Cytoplasmic. A helical transmembrane segment spans residues 41–61 (ILLGILNLIFLIIAIVFAILF). Residues 62–382 (FVGSADCAQL…FFLCKRAIDF (321 aa)) are Extracellular-facing. Positions 97–116 (NAITTTQGTPSNKTSTTTPS) are disordered. The segment covering 100-116 (TTTQGTPSNKTSTTTPS) has biased composition (low complexity). Asn-108 and Asn-189 each carry an N-linked (GlcNAc...) asparagine glycan. C-type lectin domains are found at residues 129 to 250 (VGTK…FVCE) and 264 to 377 (YNKN…FLCK). Cystine bridges form between Cys-150/Cys-249, Cys-223/Cys-241, Cys-285/Cys-376, and Cys-348/Cys-368.

Expressed in ventral cord motor neurons and PLM touch neurons.

The protein localises to the membrane. Involved in negative modulation of unc-40-mediated axon outgrowth. Required for proper presynaptic development in axons that have reached their targets. May function in concert with E3 ubiquitin-protein ligase rpm-1 in regulating axon outgrowth. This is C-type lectin domain-containing protein 38 from Caenorhabditis elegans.